Reading from the N-terminus, the 348-residue chain is dTDP-glucose 4,6-dehydratase (348 aa).

NAD(+)-binding positions include 15 to 16 (FI), 37 to 40 (DKLT), 62 to 63 (DI), and 82 to 86 (YAAES). Substrate-binding residues include Ser86 and Asn88. Thr101 provides a ligand contact to NAD(+). Thr125 is a substrate binding site. The active-site Proton donor is Asp126. Catalysis depends on proton acceptor residues Glu127 and Tyr161. 161–165 (YSSTK) is a binding site for NAD(+). Asn190 is a substrate binding site. NAD(+) is bound at residue Asn191. Substrate-binding positions include 200 to 205 (KFIPRQ), 216 to 218 (KLY), Arg225, Asn260, and 283 to 287 (DRAGH).

This sequence belongs to the NAD(P)-dependent epimerase/dehydratase family. dTDP-glucose dehydratase subfamily. In terms of assembly, homodimer. NAD(+) is required as a cofactor.

The catalysed reaction is dTDP-alpha-D-glucose = dTDP-4-dehydro-6-deoxy-alpha-D-glucose + H2O. The protein operates within carbohydrate biosynthesis; dTDP-L-rhamnose biosynthesis. Its function is as follows. Catalyzes the dehydration of dTDP-D-glucose to form dTDP-6-deoxy-D-xylo-4-hexulose via a three-step process involving oxidation, dehydration and reduction. The sequence is that of dTDP-glucose 4,6-dehydratase (rmlB) from Streptococcus mutans serotype c (strain ATCC 700610 / UA159).